The following is a 296-amino-acid chain: MSVTTPRREASLLSRAVAVAAAAAATVALAAPAQAANPYERGPNPTESMLEARSGPFSVSEERASRLGADGFGGGTIYYPRENNTYGAIAISPGYTGTQSSIAWLGERIASHGFVVIAIDTNTTLDQPDSRARQLNAALDYMLTDASSSVRNRIDASRLAVMGHSMGGGGTLRLASQRPDLKAAIPLTPWHLNKSWRDITVPTLIIGADLDTIAPVSSHSEPFYNSIPSSTDKAYLELNNATHFAPNITNKTIGMYSVAWLKRFVDEDTRYTQFLCPGPRTGLLSDVDEYRSTCPF.

The first 35 residues, methionine 1–alanine 35, serve as a signal peptide directing secretion. The disordered stretch occupies residues alanine 36–phenylalanine 57. Residue tyrosine 95 coordinates poly(ethylene terephthalate). Serine 165 acts as the Nucleophile in catalysis. Methionine 166 and tryptophan 190 together coordinate poly(ethylene terephthalate). Residues aspartate 211 and histidine 243 each act as charge relay system in the active site. Residues cysteine 276 and cysteine 294 are joined by a disulfide bond.

The protein belongs to the AB hydrolase superfamily. As to quaternary structure, monomer.

The protein localises to the secreted. It is found in the periplasm. It catalyses the reaction (ethylene terephthalate)(n) + H2O = (ethylene terephthalate)(n-1) + 4-[(2-hydroxyethoxy)carbonyl]benzoate + H(+). It carries out the reaction a butanoate ester + H2O = an aliphatic alcohol + butanoate + H(+). The catalysed reaction is cutin + H2O = cutin monomers.. In terms of biological role, catalyzes the hydrolysis of cutin, a polyester that forms the structure of plant cuticle. Shows esterase activity towards p-nitrophenol-linked aliphatic esters (pNP-aliphatic esters). Capable of degrading the plastic poly(ethylene terephthalate) (PET), the most abundant polyester plastic in the world. Can also depolymerize the synthetic polyester poly(epsilon-caprolactone) (PCL). In Thermobifida alba (Thermomonospora alba), this protein is Cutinase est1.